Here is a 159-residue protein sequence, read N- to C-terminus: Protein NrdI (159 aa).

This sequence belongs to the NrdI family.

Functionally, probably involved in ribonucleotide reductase function. The sequence is that of Protein NrdI from Rhodococcus erythropolis (strain PR4 / NBRC 100887).